The sequence spans 122 residues: Small ribosomal subunit protein uS13 (122 aa).

The interval 94-122 (KQLPVRGQRTHTNARTRKGKAKPIAGKKK) is disordered.

Belongs to the universal ribosomal protein uS13 family. In terms of assembly, part of the 30S ribosomal subunit. Forms a loose heterodimer with protein S19. Forms two bridges to the 50S subunit in the 70S ribosome.

Located at the top of the head of the 30S subunit, it contacts several helices of the 16S rRNA. In the 70S ribosome it contacts the 23S rRNA (bridge B1a) and protein L5 of the 50S subunit (bridge B1b), connecting the 2 subunits; these bridges are implicated in subunit movement. Contacts the tRNAs in the A and P-sites. The sequence is that of Small ribosomal subunit protein uS13 from Methylorubrum populi (strain ATCC BAA-705 / NCIMB 13946 / BJ001) (Methylobacterium populi).